Reading from the N-terminus, the 133-residue chain is Probable mitochondrial pyruvate carrier 2 (133 aa).

Transmembrane regions (helical) follow at residues 39 to 55, 73 to 91, and 99 to 116; these read VTNL…IVPI, ASSL…TLIS, and MLAA…YNIY.

It belongs to the mitochondrial pyruvate carrier (MPC) (TC 2.A.105) family.

Its subcellular location is the mitochondrion inner membrane. In terms of biological role, may mediate the uptake of pyruvate into mitochondria. This chain is Probable mitochondrial pyruvate carrier 2, found in Dictyostelium discoideum (Social amoeba).